Here is a 459-residue protein sequence, read N- to C-terminus: Polycomb protein mes-6 (459 aa).

WD repeat units lie at residues 146–186 (SVGW…CLIV), 192–231 (CHAG…VKEH), 305–346 (MHSD…GEVE), 370–409 (SGSA…ETNP), and 415–454 (VGSR…VDAK).

It belongs to the WD repeat ESC family. In terms of assembly, interacts directly with the N-terminal domain of mes-2. Forms a heterotrimeric complex with mes-2 and mes-3. Does not interact with mes-4. As to expression, in adults, it is predominantly expressed in the germline, and weakly expressed in intestinal cells.

The protein localises to the nucleus. Functionally, polycomb group (PcG) protein. PcG proteins act by forming multiprotein complexes, which are required to maintain the transcriptionally repressive state of homeotic genes throughout development. In association with the nfya-1-NF-Y complex, may play a role in repressing the expression of the homeobox protein egl-5 in tissues such as the head. PcG proteins are not required to initiate repression, but to maintain it during later stages of development. The mes-2/mes-3/mes-6 complex may participate in the global inactivation of the X chromosomes in germline cells. The complex may act via methylation of histone H3 'Lys-27', rendering chromatin heritably changed in its expressibility. This complex is required to exclude mes-4 from the inactivated X-chromosomes in germline cells. Required for small-RNA-induced H3K27 trimethylation. In Caenorhabditis elegans, this protein is Polycomb protein mes-6.